Consider the following 326-residue polypeptide: Tetraacyldisaccharide 4'-kinase (326 aa).

52–59 (TLGGAGKT) provides a ligand contact to ATP.

The protein belongs to the LpxK family.

The enzyme catalyses a lipid A disaccharide + ATP = a lipid IVA + ADP + H(+). The protein operates within glycolipid biosynthesis; lipid IV(A) biosynthesis; lipid IV(A) from (3R)-3-hydroxytetradecanoyl-[acyl-carrier-protein] and UDP-N-acetyl-alpha-D-glucosamine: step 6/6. Functionally, transfers the gamma-phosphate of ATP to the 4'-position of a tetraacyldisaccharide 1-phosphate intermediate (termed DS-1-P) to form tetraacyldisaccharide 1,4'-bis-phosphate (lipid IVA). In Methylobacterium radiotolerans (strain ATCC 27329 / DSM 1819 / JCM 2831 / NBRC 15690 / NCIMB 10815 / 0-1), this protein is Tetraacyldisaccharide 4'-kinase.